Here is a 256-residue protein sequence, read N- to C-terminus: Kallikrein 1-related peptidase-like b4 (256 aa).

The first 17 residues, 1 to 17, serve as a signal peptide directing secretion; it reads MWFLILFLALSLGGIDA. The tract at residues 18-24 is activation peptide homolog; the sequence is APPVQSQ. Positions 18–253 constitute a Peptidase S1 domain; that stretch reads APPVQSQVDC…FSSWIRETMA (236 aa). Cys-45 and Cys-61 are joined by a disulfide. The Zn(2+) site is built by Glu-77 and His-84. 3 disulfide bridges follow: Cys-147-Cys-214, Cys-179-Cys-193, and Cys-204-Cys-229.

Belongs to the peptidase S1 family. Kallikrein subfamily. 7S nerve growth factor is composed of two alpha chains, a beta dimer composed of identical chains, and two gamma chains. Requires Zn(2+) as cofactor. Post-translationally, the presence of Gln-24 prevents cleavage of the activation peptide, which remains attached at the amino end of the mature alpha chain.

This Mus musculus (Mouse) protein is Kallikrein 1-related peptidase-like b4 (Klk1b4).